A 115-amino-acid chain; its full sequence is Probable 4-amino-4-deoxy-L-arabinose-phosphoundecaprenol flippase subunit ArnE (115 aa).

A run of 3 helical transmembrane segments spans residues 42–62 (PWPWLALLALGLGLLCWLLLL), 65–85 (VEVGSAYPMLALNFVLVTLAA), and 93–112 (VDRRHLAGLLLIVAGVALLG). The 68-residue stretch at 46–113 (LALLALGLGL…IVAGVALLGR (68 aa)) folds into the EamA domain.

Belongs to the ArnE family. Heterodimer of ArnE and ArnF.

It is found in the cell inner membrane. It functions in the pathway bacterial outer membrane biogenesis; lipopolysaccharide biosynthesis. Functionally, translocates 4-amino-4-deoxy-L-arabinose-phosphoundecaprenol (alpha-L-Ara4N-phosphoundecaprenol) from the cytoplasmic to the periplasmic side of the inner membrane. In Pseudomonas aeruginosa (strain LESB58), this protein is Probable 4-amino-4-deoxy-L-arabinose-phosphoundecaprenol flippase subunit ArnE.